We begin with the raw amino-acid sequence, 359 residues long: Fe-S cluster assembly protein DRE2 (359 aa).

Residues 1-159 (MANILLLLHP…LFKKLSSNSN (159 aa)) are N-terminal SAM-like domain. A disordered region spans residues 152–187 (KKLSSNSNNNNNSSSPIGLTDSSAANTDEETDEANV). Positions 155 to 166 (SSNSNNNNNSSS) are enriched in low complexity. A linker region spans residues 159 to 228 (NNNNNSSSPI…DDLIKDSNQL (70 aa)). A compositionally biased stretch (polar residues) spans 167 to 177 (PIGLTDSSAAN). Cysteine 240, cysteine 252, cysteine 255, and cysteine 257 together coordinate [2Fe-2S] cluster. The tract at residues 240–257 (CEIPNGKKRRKACKDCTC) is fe-S binding site A. [4Fe-4S] cluster is bound by residues cysteine 322, cysteine 325, cysteine 333, and cysteine 336. Short sequence motifs (cx2C motif) lie at residues 322–325 (CGSC) and 333–336 (CDGC). The segment at 322–336 (CGSCALGDAFRCDGC) is fe-S binding site B.

The protein belongs to the anamorsin family. Monomer. Interacts with TAH18. Interacts with MIA40. The cofactor is [2Fe-2S] cluster. It depends on [4Fe-4S] cluster as a cofactor.

It is found in the cytoplasm. Its subcellular location is the mitochondrion intermembrane space. In terms of biological role, component of the cytosolic iron-sulfur (Fe-S) protein assembly (CIA) machinery required for the maturation of extramitochondrial Fe-S proteins. Part of an electron transfer chain functioning in an early step of cytosolic Fe-S biogenesis, facilitating the de novo assembly of a [4Fe-4S] cluster on the scaffold complex CFD1-NBP35. Electrons are transferred to DRE2 from NADPH via the FAD- and FMN-containing protein TAH18. TAH18-DRE2 are also required for the assembly of the diferric tyrosyl radical cofactor of ribonucleotide reductase (RNR), probably by providing electrons for reduction during radical cofactor maturation in the catalytic small subunit RNR2. The chain is Fe-S cluster assembly protein DRE2 from Scheffersomyces stipitis (strain ATCC 58785 / CBS 6054 / NBRC 10063 / NRRL Y-11545) (Yeast).